The chain runs to 222 residues: THAP domain-containing protein 6 (222 aa).

A THAP-type zinc finger spans residues 1 to 89; sequence MVKCCSAIGC…LKPGVIPSIF (89 aa). Positions 139–142 match the HCFC1-binding motif (HBM) motif; it reads EHSY. The stretch at 149–194 forms a coiled coil; the sequence is KKLKHKLDHVIGELEDTKESLRNVLDREKRFQKSLRKTIRELKDEC.

The protein is THAP domain-containing protein 6 (THAP6) of Homo sapiens (Human).